Here is a 327-residue protein sequence, read N- to C-terminus: Probable protein phosphatase 2C 59 (327 aa).

The first 24 residues, 1-24, serve as a signal peptide directing secretion; sequence MREVLLLGSLVVLALLSLFPCCSC. The region spanning 64–310 is the PPM-type phosphatase domain; that stretch reads SYGYASSPGK…DNITCLVVRF (247 aa). Mn(2+)-binding residues include Asp100, Gly101, Asp262, and Asp301.

It belongs to the PP2C family. Requires Mg(2+) as cofactor. The cofactor is Mn(2+).

The enzyme catalyses O-phospho-L-seryl-[protein] + H2O = L-seryl-[protein] + phosphate. The catalysed reaction is O-phospho-L-threonyl-[protein] + H2O = L-threonyl-[protein] + phosphate. This chain is Probable protein phosphatase 2C 59, found in Oryza sativa subsp. japonica (Rice).